The sequence spans 468 residues: ATP synthase subunit beta (468 aa).

Position 155–162 (155–162 (GGAGVGKT)) interacts with ATP.

It belongs to the ATPase alpha/beta chains family. As to quaternary structure, F-type ATPases have 2 components, CF(1) - the catalytic core - and CF(0) - the membrane proton channel. CF(1) has five subunits: alpha(3), beta(3), gamma(1), delta(1), epsilon(1). CF(0) has three main subunits: a(1), b(2) and c(9-12). The alpha and beta chains form an alternating ring which encloses part of the gamma chain. CF(1) is attached to CF(0) by a central stalk formed by the gamma and epsilon chains, while a peripheral stalk is formed by the delta and b chains.

It localises to the cell membrane. It catalyses the reaction ATP + H2O + 4 H(+)(in) = ADP + phosphate + 5 H(+)(out). Functionally, produces ATP from ADP in the presence of a proton gradient across the membrane. The catalytic sites are hosted primarily by the beta subunits. The chain is ATP synthase subunit beta from Streptococcus pneumoniae serotype 19F (strain G54).